We begin with the raw amino-acid sequence, 441 residues long: Ribulose bisphosphate carboxylase large chain (441 aa).

At Lys5 the chain carries N6,N6,N6-trimethyllysine. 2 residues coordinate substrate: Asn114 and Thr164. The active-site Proton acceptor is Lys166. Lys168 provides a ligand contact to substrate. The Mg(2+) site is built by Lys192, Asp194, and Glu195. Residue Lys192 is modified to N6-carboxylysine. His285 serves as the catalytic Proton acceptor. Substrate is bound by residues Arg286, His318, and Ser370.

The protein belongs to the RuBisCO large chain family. Type I subfamily. As to quaternary structure, heterohexadecamer of 8 large chains and 8 small chains; disulfide-linked. The disulfide link is formed within the large subunit homodimers. Requires Mg(2+) as cofactor. Post-translationally, the disulfide bond which can form in the large chain dimeric partners within the hexadecamer appears to be associated with oxidative stress and protein turnover.

It is found in the plastid. It localises to the chloroplast. The catalysed reaction is 2 (2R)-3-phosphoglycerate + 2 H(+) = D-ribulose 1,5-bisphosphate + CO2 + H2O. It catalyses the reaction D-ribulose 1,5-bisphosphate + O2 = 2-phosphoglycolate + (2R)-3-phosphoglycerate + 2 H(+). Functionally, ruBisCO catalyzes two reactions: the carboxylation of D-ribulose 1,5-bisphosphate, the primary event in carbon dioxide fixation, as well as the oxidative fragmentation of the pentose substrate in the photorespiration process. Both reactions occur simultaneously and in competition at the same active site. The chain is Ribulose bisphosphate carboxylase large chain from Pellaea rotundifolia (Button fern).